Consider the following 142-residue polypeptide: Metallothiol transferase FosB (142 aa).

In terms of domain architecture, VOC spans 5–120 (NVNHICFSVS…DGHKIELHTG (116 aa)). His-8, His-67, and Glu-116 together coordinate Mg(2+). The Proton donor/acceptor role is filled by Glu-116.

It belongs to the fosfomycin resistance protein family. FosB subfamily. In terms of assembly, homodimer. The cofactor is Mg(2+).

Its subcellular location is the cytoplasm. Its function is as follows. Metallothiol transferase which confers resistance to fosfomycin by catalyzing the addition of a thiol cofactor to fosfomycin. L-cysteine is probably the physiological thiol donor. In Staphylococcus epidermidis (strain ATCC 35984 / DSM 28319 / BCRC 17069 / CCUG 31568 / BM 3577 / RP62A), this protein is Metallothiol transferase FosB.